The chain runs to 124 residues: MNNLLLVALGGSIGAVFRYLISIFMIQVFGSSFPFGTLLVNVLGSFLMGVIYALGQMSHISPELKALIGIGLLGALTTFSTFSNETLLLLQEGDWLKATLNVVLNLSLCLFMVYLGQQLVFSRI.

The next 4 membrane-spanning stretches (helical) occupy residues 4–24 (LLLV…ISIF), 35–55 (FGTL…YALG), 60–80 (ISPE…TTFS), and 102–122 (VVLN…LVFS). Na(+) is bound by residues glycine 74 and threonine 77.

The protein belongs to the fluoride channel Fluc/FEX (TC 1.A.43) family.

The protein localises to the cell inner membrane. It carries out the reaction fluoride(in) = fluoride(out). Na(+) is not transported, but it plays an essential structural role and its presence is essential for fluoride channel function. Functionally, fluoride-specific ion channel. Important for reducing fluoride concentration in the cell, thus reducing its toxicity. The polypeptide is Fluoride-specific ion channel FluC (Shewanella baltica (strain OS185)).